Reading from the N-terminus, the 98-residue chain is NADH-ubiquinone oxidoreductase chain 4L (98 aa).

The next 3 membrane-spanning stretches (helical) occupy residues 1-21 (MVLIKLNIIMAFMLALTGVLI), 36-56 (MMLSLFIFMAAVITHFHMFSI), and 61-81 (LILLVFSACEAGVGLALLVTI).

Belongs to the complex I subunit 4L family. Core subunit of respiratory chain NADH dehydrogenase (Complex I) which is composed of 45 different subunits.

Its subcellular location is the mitochondrion inner membrane. It carries out the reaction a ubiquinone + NADH + 5 H(+)(in) = a ubiquinol + NAD(+) + 4 H(+)(out). Core subunit of the mitochondrial membrane respiratory chain NADH dehydrogenase (Complex I) which catalyzes electron transfer from NADH through the respiratory chain, using ubiquinone as an electron acceptor. Part of the enzyme membrane arm which is embedded in the lipid bilayer and involved in proton translocation. This Metachirus nudicaudatus (Brown four-eyed opossum) protein is NADH-ubiquinone oxidoreductase chain 4L (MT-ND4L).